The sequence spans 469 residues: Probable glycine dehydrogenase (decarboxylating) subunit 1 (469 aa).

Belongs to the GcvP family. N-terminal subunit subfamily. As to quaternary structure, the glycine cleavage system is composed of four proteins: P, T, L and H. In this organism, the P 'protein' is a heterodimer of two subunits.

The enzyme catalyses N(6)-[(R)-lipoyl]-L-lysyl-[glycine-cleavage complex H protein] + glycine + H(+) = N(6)-[(R)-S(8)-aminomethyldihydrolipoyl]-L-lysyl-[glycine-cleavage complex H protein] + CO2. The glycine cleavage system catalyzes the degradation of glycine. The P protein binds the alpha-amino group of glycine through its pyridoxal phosphate cofactor; CO(2) is released and the remaining methylamine moiety is then transferred to the lipoamide cofactor of the H protein. In Staphylothermus marinus (strain ATCC 43588 / DSM 3639 / JCM 9404 / F1), this protein is Probable glycine dehydrogenase (decarboxylating) subunit 1.